The primary structure comprises 136 residues: Calmodulin-A (136 aa).

EF-hand domains follow at residues 1–36, 37–72, 74–109, and 110–136; these read EQIA…LGQN, PTEA…KMKD, DSEE…LGEK, and LTDE…EEFV. Ca(2+) is bound by residues aspartate 14, aspartate 16, aspartate 18, threonine 20, glutamate 25, aspartate 50, aspartate 52, asparagine 54, threonine 56, glutamate 61, aspartate 87, aspartate 89, asparagine 91, tyrosine 93, and glutamate 98. Lysine 109 is modified (N6,N6,N6-trimethyllysine). Positions 123, 125, 127, 129, and 134 each coordinate Ca(2+).

The protein belongs to the calmodulin family.

In terms of biological role, calmodulin acts as part of a calcium signal transduction pathway by mediating the control of a large number of enzymes, ion channels, aquaporins and other proteins through calcium-binding. Calcium-binding is required for the activation of calmodulin. Among the enzymes to be stimulated by the calmodulin-calcium complex are a number of protein kinases, such as myosin light-chain kinases and calmodulin-dependent protein kinase type II (CaMK2), and phosphatases. In Oryzias latipes (Japanese rice fish), this protein is Calmodulin-A (calm1).